Here is a 255-residue protein sequence, read N- to C-terminus: GTP cyclohydrolase III (255 aa).

It belongs to the archaeal-type GTP cyclohydrolase family.

The enzyme catalyses GTP + 3 H2O = 2-amino-5-formylamino-6-(5-phospho-D-ribosylamino)pyrimidin-4(3H)-one + 2 phosphate + 2 H(+). Functionally, catalyzes the formation of 2-amino-5-formylamino-6-ribofuranosylamino-4(3H)-pyrimidinone ribonucleotide monophosphate and inorganic phosphate from GTP. Also has an independent pyrophosphate phosphohydrolase activity. The sequence is that of GTP cyclohydrolase III from Methanosphaera stadtmanae (strain ATCC 43021 / DSM 3091 / JCM 11832 / MCB-3).